The primary structure comprises 690 residues: Protein arginine N-methyltransferase 7 (690 aa).

2 SAM-dependent MTase PRMT-type domains span residues 14 to 357 and 366 to 690; these read QNSW…YSLW and TKSV…QKKL.

The protein belongs to the class I-like SAM-binding methyltransferase superfamily. Protein arginine N-methyltransferase family. PRMT7 subfamily.

Functionally, essential arginine methyltransferase that can both catalyze the formation of omega-N monomethylarginine (MMA) and symmetrical dimethylarginine (sDMA). Specifically mediates the symmetrical dimethylation of arginine residues in the small nuclear ribonucleoproteins SmD1 and SmD3. The protein is Protein arginine N-methyltransferase 7 (Art7) of Drosophila yakuba (Fruit fly).